Here is a 320-residue protein sequence, read N- to C-terminus: Aminoacyl tRNA synthase complex-interacting multifunctional protein 2 (320 aa).

Ser-36 bears the Phosphoserine mark. An interaction with PRKN region spans residues 82–162 (TPDADLDVTN…HTHSSVKNVP (81 aa)). An interaction with TP53 region spans residues 162–225 (PENLVKCFGE…FLFSLFGQKH (64 aa)). One can recognise a GST C-terminal domain in the interval 220 to 317 (LFGQKHNAVT…NLAPFSTALQ (98 aa)).

Part of the multisynthetase complex (MSC), a multisubunit complex that groups tRNA ligases for Arg (RARS1), Asp (DARS1), Gln (QARS1), Ile (IARS1), Leu (LARS1), Lys (KARS1), Met (MARS1) the bifunctional ligase for Glu and Pro (EPRS1) and the auxiliary subunits AIMP1/p43, AIMP2/p38 and EEF1E1/p18. Interacts (via N-terminus) with KARS1. Interacts with EPRS1. Forms a linear complex that contains MARS1, EEF1E1, EPRS1 and AIMP2 that is at the core of the multisubunit complex. Binds FUBP1 (via C-terminus). Interacts in both its unphosphorylated and phosphorylated forms with p53/TP53 (via N-terminus) in the nucleus following UV irradiation. Interacts (via N-terminus) with PRKN/parkin (via first RING-type domain). Interacts with TARS3. In terms of processing, phosphorylated on serine residues in response to UV irradiation. Ubiquitinated by PRKN, leading to its degradation by the proteasome.

The protein resides in the cytoplasm. Its subcellular location is the cytosol. It is found in the nucleus. In terms of biological role, required for assembly and stability of the aminoacyl-tRNA synthase complex. Mediates ubiquitination and degradation of FUBP1, a transcriptional activator of MYC, leading to MYC down-regulation which is required for aveolar type II cell differentiation. Blocks MDM2-mediated ubiquitination and degradation of p53/TP53. Functions as a proapoptotic factor. The chain is Aminoacyl tRNA synthase complex-interacting multifunctional protein 2 (Aimp2) from Mus musculus (Mouse).